We begin with the raw amino-acid sequence, 249 residues long: 2,3-bisphosphoglycerate-dependent phosphoglycerate mutase (249 aa).

Residues 7–14 (RHGESEWN), 20–21 (TG), R59, 86–89 (ERHY), K97, 113–114 (RR), and 182–183 (GN) contribute to the substrate site. H8 (tele-phosphohistidine intermediate) is an active-site residue. Residue E86 is the Proton donor/acceptor of the active site.

Belongs to the phosphoglycerate mutase family. BPG-dependent PGAM subfamily.

The catalysed reaction is (2R)-2-phosphoglycerate = (2R)-3-phosphoglycerate. It functions in the pathway carbohydrate degradation; glycolysis; pyruvate from D-glyceraldehyde 3-phosphate: step 3/5. Its function is as follows. Catalyzes the interconversion of 2-phosphoglycerate and 3-phosphoglycerate. This chain is 2,3-bisphosphoglycerate-dependent phosphoglycerate mutase, found in Lachnoclostridium phytofermentans (strain ATCC 700394 / DSM 18823 / ISDg) (Clostridium phytofermentans).